The chain runs to 201 residues: Probable calcium-binding protein CML15 (201 aa).

The segment at 1 to 55 is disordered; sequence MGKVRAFFSRKGRGNSSGRSRSMREAAMNVDWSPRPSDLAAAAAAKPRPPAAEDE. EF-hand domains follow at residues 51–86, 87–122, 125–160, and 161–196; these read AAEDETERVFRKFDANGDGRISRAELAALFRSVGHA, VTDDEVARMMQEADSDGDGYISLGEFAAISAPPPGD, AAEEDLRHAFGVFDADGNGVITPAELARVLRGIGEA, and ATVAQCRRMIDGVDRNGDGLINFEEFKLMMAAGAGF. Residues Asp64, Asn66, Asp68, Arg70, Glu75, Asp100, Asp102, Asp104, Tyr106, Glu111, Asp138, Asp140, Asn142, Glu149, Asp174, Asn176, Asp178, and Glu185 each coordinate Ca(2+).

In terms of biological role, potential calcium sensor. In Oryza sativa subsp. japonica (Rice), this protein is Probable calcium-binding protein CML15 (CML15).